The primary structure comprises 579 residues: Cyclin-T1-5 (579 aa).

Disordered stretches follow at residues 1-27 (MAGV…HEKQ) and 271-419 (RVPA…GDAL). Residues 11–20 (YSESGVSSHS) show a composition bias toward polar residues. Positions 274-283 (ASQGSEVESS) are enriched in low complexity. The segment covering 306-334 (SRQTSSVRSTHEQSNSDNHGGSSKGVLNQ) has biased composition (polar residues). Basic and acidic residues-rich tracts occupy residues 349–380 (DNKE…EAPH) and 389–414 (PGKD…RNVD). The residue at position 423 (Ser-423) is a Phosphoserine. Composition is skewed to basic and acidic residues over residues 474–512 (DEKT…KNTE), 538–556 (KQSE…ESHK), and 563–579 (HHGD…NNHS). The tract at residues 474–579 (DEKTKERKVQ…RRHSQENNHS (106 aa)) is disordered.

The protein belongs to the cyclin family. Cyclin T subfamily.

The polypeptide is Cyclin-T1-5 (CYCT1-5) (Arabidopsis thaliana (Mouse-ear cress)).